Consider the following 1157-residue polypeptide: ATP-dependent helicase/deoxyribonuclease subunit B (1157 aa).

In terms of domain architecture, UvrD-like helicase ATP-binding spans 1–278 (MTLQIIAGRS…FFLENKRAKT (278 aa)). 8–15 (GRSGTGKT) contributes to the ATP binding site. The 319-residue stretch at 272 to 590 (ENKRAKTESL…VLSDMENAKL (319 aa)) folds into the UvrD-like helicase C-terminal domain. Residues Cys-794, Cys-1115, Cys-1118, and Cys-1124 each contribute to the [4Fe-4S] cluster site.

It belongs to the helicase family. AddB/RexB type 1 subfamily. As to quaternary structure, heterodimer of AddA and AddB. It depends on Mg(2+) as a cofactor. The cofactor is [4Fe-4S] cluster.

In terms of biological role, the heterodimer acts as both an ATP-dependent DNA helicase and an ATP-dependent, dual-direction single-stranded exonuclease. Recognizes the chi site generating a DNA molecule suitable for the initiation of homologous recombination. The AddB subunit has 5' -&gt; 3' nuclease activity but not helicase activity. This chain is ATP-dependent helicase/deoxyribonuclease subunit B, found in Listeria monocytogenes serotype 4a (strain HCC23).